Reading from the N-terminus, the 166-residue chain is KH homology domain-containing protein 1A (166 aa).

Positions 19-78 constitute a KH; atypical domain; sequence PLVFDMEEDKEDYIFGPHDEYLHTLEVHSNTLIQLERWFTPTGQTRVTVVGPLKARLWVM.

The protein belongs to the KHDC1 family.

The protein localises to the cytoplasm. Functionally, has pro-apoptotic activity. The polypeptide is KH homology domain-containing protein 1A (Khdc1a) (Mus musculus (Mouse)).